The chain runs to 403 residues: tRNA pseudouridine synthase D (403 aa).

Over residues 1 to 10 (MTVQVQDHDI) the composition is skewed to basic and acidic residues. A disordered region spans residues 1 to 24 (MTVQVQDHDITTAADTAKLPQPMQ). Catalysis depends on aspartate 92, which acts as the Nucleophile. Residues 192–354 (GVPNYFGPQR…IKAQRRALRL (163 aa)) enclose the TRUD domain. The disordered stretch occupies residues 217 to 240 (ARPVPESRPQPNKGKRKRVPREQN).

This sequence belongs to the pseudouridine synthase TruD family.

The catalysed reaction is uridine(13) in tRNA = pseudouridine(13) in tRNA. In terms of biological role, responsible for synthesis of pseudouridine from uracil-13 in transfer RNAs. The sequence is that of tRNA pseudouridine synthase D from Psychrobacter arcticus (strain DSM 17307 / VKM B-2377 / 273-4).